A 463-amino-acid chain; its full sequence is Argininosuccinate lyase (463 aa).

This sequence belongs to the lyase 1 family. Argininosuccinate lyase subfamily.

The protein localises to the cytoplasm. The enzyme catalyses 2-(N(omega)-L-arginino)succinate = fumarate + L-arginine. The protein operates within amino-acid biosynthesis; L-arginine biosynthesis; L-arginine from L-ornithine and carbamoyl phosphate: step 3/3. The protein is Argininosuccinate lyase of Chlorobaculum parvum (strain DSM 263 / NCIMB 8327) (Chlorobium vibrioforme subsp. thiosulfatophilum).